The sequence spans 180 residues: Large ribosomal subunit protein uL5 (180 aa).

Belongs to the universal ribosomal protein uL5 family. Part of the 50S ribosomal subunit; part of the 5S rRNA/L5/L18/L25 subcomplex. Contacts the 5S rRNA and the P site tRNA. Forms a bridge to the 30S subunit in the 70S ribosome.

In terms of biological role, this is one of the proteins that bind and probably mediate the attachment of the 5S RNA into the large ribosomal subunit, where it forms part of the central protuberance. In the 70S ribosome it contacts protein S13 of the 30S subunit (bridge B1b), connecting the 2 subunits; this bridge is implicated in subunit movement. Contacts the P site tRNA; the 5S rRNA and some of its associated proteins might help stabilize positioning of ribosome-bound tRNAs. This is Large ribosomal subunit protein uL5 from Pediococcus pentosaceus (strain ATCC 25745 / CCUG 21536 / LMG 10740 / 183-1w).